Consider the following 250-residue polypeptide: MKGSLSEHKAGNRRFTLYLPPSYSTDSGGFPAVYVQDGSSLFQNQIELLESAFQQQRLPELVLIGIEPENRLDEYTPWPAASLSDRFTDFGGMGYHYLSDITNQFIPLIEENWNVTREPQSRGMIGASLGGLISMFAILKYPSMFGKIGSISGSYWYENAAETIHISSLKPGTARVFMSIGSEEGREKQSIQRHMLKKTKQVHQSLKEKGFTEDQLCLSIEKGAVHHHKYFCKQFINALEWLYGKNRSTL.

This is an uncharacterized protein from Bacillus subtilis (strain 168).